Here is a 704-residue protein sequence, read N- to C-terminus: UvrABC system protein B (704 aa).

Residues 35–188 (ERINNGEKDV…DDLLRKFVSM (154 aa)) form the Helicase ATP-binding domain. Position 48-55 (48-55 (GATGTGKS)) interacts with ATP. The Beta-hairpin signature appears at 101 to 124 (YYDYYQPEAYVAQTDTFIEKDSSI). The region spanning 438–604 (QIDDLLGEIR…PLRKKIADIT (167 aa)) is the Helicase C-terminal domain. The UVR domain maps to 659 to 694 (VGMIAQLTEQMHGAAAELQFEVAARIRDEVSELKKE).

This sequence belongs to the UvrB family. Forms a heterotetramer with UvrA during the search for lesions. Interacts with UvrC in an incision complex.

The protein localises to the cytoplasm. Its function is as follows. The UvrABC repair system catalyzes the recognition and processing of DNA lesions. A damage recognition complex composed of 2 UvrA and 2 UvrB subunits scans DNA for abnormalities. Upon binding of the UvrA(2)B(2) complex to a putative damaged site, the DNA wraps around one UvrB monomer. DNA wrap is dependent on ATP binding by UvrB and probably causes local melting of the DNA helix, facilitating insertion of UvrB beta-hairpin between the DNA strands. Then UvrB probes one DNA strand for the presence of a lesion. If a lesion is found the UvrA subunits dissociate and the UvrB-DNA preincision complex is formed. This complex is subsequently bound by UvrC and the second UvrB is released. If no lesion is found, the DNA wraps around the other UvrB subunit that will check the other stand for damage. This is UvrABC system protein B from Pseudarthrobacter chlorophenolicus (strain ATCC 700700 / DSM 12829 / CIP 107037 / JCM 12360 / KCTC 9906 / NCIMB 13794 / A6) (Arthrobacter chlorophenolicus).